Consider the following 275-residue polypeptide: 4-deoxy-L-threo-5-hexosulose-uronate ketol-isomerase (275 aa).

Zn(2+) contacts are provided by His-193, His-195, Glu-200, and His-242.

It belongs to the KduI family. Zn(2+) serves as cofactor.

It carries out the reaction 5-dehydro-4-deoxy-D-glucuronate = 3-deoxy-D-glycero-2,5-hexodiulosonate. It functions in the pathway glycan metabolism; pectin degradation; 2-dehydro-3-deoxy-D-gluconate from pectin: step 4/5. In terms of biological role, catalyzes the isomerization of 5-dehydro-4-deoxy-D-glucuronate to 3-deoxy-D-glycero-2,5-hexodiulosonate. In Bacillus licheniformis (strain ATCC 14580 / DSM 13 / JCM 2505 / CCUG 7422 / NBRC 12200 / NCIMB 9375 / NCTC 10341 / NRRL NRS-1264 / Gibson 46), this protein is 4-deoxy-L-threo-5-hexosulose-uronate ketol-isomerase.